Here is a 308-residue protein sequence, read N- to C-terminus: Cytochrome b (308 aa).

Helical transmembrane passes span 1–21 (FGSL…LLAM), 45–66 (WLIR…YLHI), 81–101 (WNIG…GYVL), and 146–166 (FFAL…IHLT). Heme b-binding residues include His51 and His65. 2 residues coordinate heme b: His150 and His164. A ubiquinone is bound at residue His169. A run of 3 helical transmembrane segments spans residues 194 to 214 (TKDA…AMFS), 256 to 276 (LGGV…PLLH), and 288 to 308 (LSQF…WIGS).

The protein belongs to the cytochrome b family. As to quaternary structure, the cytochrome bc1 complex contains 11 subunits: 3 respiratory subunits (MT-CYB, CYC1 and UQCRFS1), 2 core proteins (UQCRC1 and UQCRC2) and 6 low-molecular weight proteins (UQCRH/QCR6, UQCRB/QCR7, UQCRQ/QCR8, UQCR10/QCR9, UQCR11/QCR10 and a cleavage product of UQCRFS1). This cytochrome bc1 complex then forms a dimer. Heme b is required as a cofactor.

The protein resides in the mitochondrion inner membrane. Component of the ubiquinol-cytochrome c reductase complex (complex III or cytochrome b-c1 complex) that is part of the mitochondrial respiratory chain. The b-c1 complex mediates electron transfer from ubiquinol to cytochrome c. Contributes to the generation of a proton gradient across the mitochondrial membrane that is then used for ATP synthesis. This Zaratornis stresemanni (White-cheeked cotinga) protein is Cytochrome b (MT-CYB).